A 137-amino-acid polypeptide reads, in one-letter code: Large ribosomal subunit protein uL16 (137 aa).

This sequence belongs to the universal ribosomal protein uL16 family. As to quaternary structure, part of the 50S ribosomal subunit.

Its function is as follows. Binds 23S rRNA and is also seen to make contacts with the A and possibly P site tRNAs. The chain is Large ribosomal subunit protein uL16 from Oleidesulfovibrio alaskensis (strain ATCC BAA-1058 / DSM 17464 / G20) (Desulfovibrio alaskensis).